A 493-amino-acid polypeptide reads, in one-letter code: Voltage-gated potassium channel regulatory subunit KCNF1 (493 aa).

The Cytoplasmic portion of the chain corresponds to 1 to 183 (MDASAEQSLP…KPESSCPARV (183 aa)). The helical transmembrane segment at 184-204 (VAVLSFLLILVSSVVMCMGTI) threads the bilayer. Residues 224–244 (NVETACIGWFTLEYLLRLFSS) traverse the membrane as a helical segment. The Cytoplasmic portion of the chain corresponds to 245–249 (PNKLH). Residues 250-270 (FALSFMNIVDVLAILPFYVSL) traverse the membrane as a helical segment. The helical; Voltage-sensor transmembrane segment at 290–310 (QALRIMRIARIFKLARHSSGL) threads the bilayer. Residues 311–324 (QTLTYALKRSFKEL) lie on the Cytoplasmic side of the membrane. Residues 325 to 345 (GLLLMYLAVGIFVFSALGYTM) traverse the membrane as a helical segment. Residues 358–378 (PQSFWWAIITMTTVGYGDIYP) constitute an intramembrane region (pore-forming). Positions 370 to 375 (TVGYGD) match the Selectivity filter motif. Residues 386–406 (NAAISFLCGVIAIALPIHPII) form a helical membrane-spanning segment. The Cytoplasmic portion of the chain corresponds to 407–493 (NNFVRYYNKQ…HHRTRLQSCK (87 aa)). A disordered region spans residues 434–468 (SSSAEGKPGGSRSDLDTLPPEPAAREGPSWGSRLK).

This sequence belongs to the potassium channel family. F (TC 1.A.1.2) subfamily. Kv5.1/KCNF1 sub-subfamily. Heterotetramer with KCNB1 or KCNB2.

Its subcellular location is the cell membrane. In terms of biological role, regulatory alpha-subunit of the voltage-gated potassium (Kv) channel which, when coassembled with KCNB1 or KCNB2, can modulate their expression and their gating kinetics by acting on deactivation upon repolarization and inactivation during maintained depolarization. Accelerates inactivation but has relatively little effect on deactivation. Coexpression with KCNB1 or KCNB2 markedly slows inactivation. Each modulatory subunit has its own specific properties of regulation, and can lead to extensive inhibitions, to large changes in kinetics, and/or to large shifts in the voltage dependencies of the inactivation process. The gating kinetics depends on the nature and stoichiometry of the associated regulatory sunbunit. Fails to produce a potassium current when expressed alone. The sequence is that of Voltage-gated potassium channel regulatory subunit KCNF1 from Mus musculus (Mouse).